Consider the following 584-residue polypeptide: Long-chain-fatty-acid--AMP ligase FadD23 (584 aa).

Transmembrane regions (helical) follow at residues 199-219 and 225-245; these read YFAD…WLPF and LVLG…TSPV.

Belongs to the ATP-dependent AMP-binding enzyme family.

It localises to the membrane. It carries out the reaction holo-[(hydroxy)phthioceranic acid synthase] + hexadecanoate + ATP = hexadecanoyl-[(hydroxy)phthioceranic acid synthase] + AMP + diphosphate. It catalyses the reaction holo-[(hydroxy)phthioceranic acid synthase] + octadecanoate + ATP = octadecanoyl-[(hydroxy)phthioceranic acid synthase] + AMP + diphosphate. Its pathway is lipid metabolism; fatty acid biosynthesis. Functionally, catalyzes the activation of long-chain fatty acids as acyl-adenylates (acyl-AMP), which are then transferred to the multifunctional polyketide synthase (PKS) type III for further chain extension. Involved in the biosynthesis of sulfolipid 1 (SL-1). This is Long-chain-fatty-acid--AMP ligase FadD23 (fadD23) from Mycobacterium bovis (strain ATCC BAA-935 / AF2122/97).